A 367-amino-acid polypeptide reads, in one-letter code: Quinolinate synthase (367 aa).

2 residues coordinate iminosuccinate: H45 and S62. C109 serves as a coordination point for [4Fe-4S] cluster. Iminosuccinate contacts are provided by residues 140–142 (YVN) and S161. C229 lines the [4Fe-4S] cluster pocket. Residues 255–257 (HPE) and T272 each bind iminosuccinate. C319 provides a ligand contact to [4Fe-4S] cluster.

This sequence belongs to the quinolinate synthase family. Type 3 subfamily. It depends on [4Fe-4S] cluster as a cofactor.

It is found in the cytoplasm. The enzyme catalyses iminosuccinate + dihydroxyacetone phosphate = quinolinate + phosphate + 2 H2O + H(+). It participates in cofactor biosynthesis; NAD(+) biosynthesis; quinolinate from iminoaspartate: step 1/1. Its function is as follows. Catalyzes the condensation of iminoaspartate with dihydroxyacetone phosphate to form quinolinate. In Lysinibacillus sphaericus (strain C3-41), this protein is Quinolinate synthase.